The chain runs to 453 residues: Bifunctional protein GlmU (453 aa).

Residues 1-226 form a pyrophosphorylase region; it reads MKFSAVILAA…AIEVEGVNDR (226 aa). UDP-N-acetyl-alpha-D-glucosamine-binding positions include 8–11, Lys22, Gln73, 78–79, 100–102, Gly137, Glu151, Asn166, and Asn224; these read LAAG, GT, and YGD. Asp102 contributes to the Mg(2+) binding site. Asn224 is a binding site for Mg(2+). Residues 227–247 are linker; sequence AQLARLERAFQSMQAQKLLEQ. The interval 248-453 is N-acetyltransferase; the sequence is GVMLRDPARF…TGWQRPVKQK (206 aa). UDP-N-acetyl-alpha-D-glucosamine contacts are provided by Arg330 and Lys348. The Proton acceptor role is filled by His360. Residues Tyr363 and Asn374 each contribute to the UDP-N-acetyl-alpha-D-glucosamine site. Acetyl-CoA contacts are provided by residues Ala377, 383–384, Ser402, Ala420, and Arg437; that span reads NY.

It in the N-terminal section; belongs to the N-acetylglucosamine-1-phosphate uridyltransferase family. In the C-terminal section; belongs to the transferase hexapeptide repeat family. In terms of assembly, homotrimer. It depends on Mg(2+) as a cofactor.

Its subcellular location is the cytoplasm. The catalysed reaction is alpha-D-glucosamine 1-phosphate + acetyl-CoA = N-acetyl-alpha-D-glucosamine 1-phosphate + CoA + H(+). It catalyses the reaction N-acetyl-alpha-D-glucosamine 1-phosphate + UTP + H(+) = UDP-N-acetyl-alpha-D-glucosamine + diphosphate. Its pathway is nucleotide-sugar biosynthesis; UDP-N-acetyl-alpha-D-glucosamine biosynthesis; N-acetyl-alpha-D-glucosamine 1-phosphate from alpha-D-glucosamine 6-phosphate (route II): step 2/2. It functions in the pathway nucleotide-sugar biosynthesis; UDP-N-acetyl-alpha-D-glucosamine biosynthesis; UDP-N-acetyl-alpha-D-glucosamine from N-acetyl-alpha-D-glucosamine 1-phosphate: step 1/1. It participates in bacterial outer membrane biogenesis; LPS lipid A biosynthesis. In terms of biological role, catalyzes the last two sequential reactions in the de novo biosynthetic pathway for UDP-N-acetylglucosamine (UDP-GlcNAc). The C-terminal domain catalyzes the transfer of acetyl group from acetyl coenzyme A to glucosamine-1-phosphate (GlcN-1-P) to produce N-acetylglucosamine-1-phosphate (GlcNAc-1-P), which is converted into UDP-GlcNAc by the transfer of uridine 5-monophosphate (from uridine 5-triphosphate), a reaction catalyzed by the N-terminal domain. This is Bifunctional protein GlmU from Vibrio parahaemolyticus serotype O3:K6 (strain RIMD 2210633).